Reading from the N-terminus, the 160-residue chain is MGVTKKPDLKDPVLRARLAKGMGHNYYGEPAWPNDLLYIFPVVILGTIACTVGLAVLEPSIIGEPANPFATPLEILPEWYFFPVFQILRTVPNKFFGVLLMTSVPFGLLTVPFLENVNQFQNPFRRPVATSVFLIGTVISLWLGFGAVLPIEESLTLGLF.

A run of 4 helical transmembrane segments spans residues 36–56, 68–88, 95–115, and 131–151; these read LLYI…GLAV, PFAT…FQIL, FFGV…PFLE, and SVFL…VLPI.

It belongs to the cytochrome b family. PetD subfamily. The 4 large subunits of the cytochrome b6-f complex are cytochrome b6, subunit IV (17 kDa polypeptide, petD), cytochrome f and the Rieske protein, while the 4 small subunits are petG, petL, petM and petN. The complex functions as a dimer.

Its subcellular location is the plastid. It localises to the chloroplast thylakoid membrane. In terms of biological role, component of the cytochrome b6-f complex, which mediates electron transfer between photosystem II (PSII) and photosystem I (PSI), cyclic electron flow around PSI, and state transitions. This chain is Cytochrome b6-f complex subunit 4, found in Welwitschia mirabilis (Tree tumbo).